The primary structure comprises 447 residues: Phosphoglucosamine mutase (447 aa).

Serine 103 functions as the Phosphoserine intermediate in the catalytic mechanism. 4 residues coordinate Mg(2+): serine 103, aspartate 242, aspartate 244, and aspartate 246. Position 103 is a phosphoserine (serine 103).

Belongs to the phosphohexose mutase family. Mg(2+) is required as a cofactor. In terms of processing, activated by phosphorylation.

It catalyses the reaction alpha-D-glucosamine 1-phosphate = D-glucosamine 6-phosphate. In terms of biological role, catalyzes the conversion of glucosamine-6-phosphate to glucosamine-1-phosphate. The chain is Phosphoglucosamine mutase from Jannaschia sp. (strain CCS1).